The primary structure comprises 189 residues: UPF0251 protein MTH_1178 (189 aa).

The protein belongs to the UPF0251 family.

The sequence is that of UPF0251 protein MTH_1178 from Methanothermobacter thermautotrophicus (strain ATCC 29096 / DSM 1053 / JCM 10044 / NBRC 100330 / Delta H) (Methanobacterium thermoautotrophicum).